The primary structure comprises 227 residues: Endo-1,4-beta-xylanase 2 (227 aa).

The first 36 residues, 1–36 (MVSIKSVLAAATAVSSALAAPFDFVPRDNSTALQAR), serve as a signal peptide directing secretion. N-linked (GlcNAc...) asparagine glycosylation is present at N29. Residues 37 to 225 (QVTPNAEGWH…SSGESDIYVQ (189 aa)) form the GH11 domain. The active-site Nucleophile is E121. The active-site Proton donor is E212.

This sequence belongs to the glycosyl hydrolase 11 (cellulase G) family.

It is found in the secreted. It catalyses the reaction Endohydrolysis of (1-&gt;4)-beta-D-xylosidic linkages in xylans.. The protein operates within glycan degradation; xylan degradation. Its function is as follows. Endo-1,4-beta-xylanase involved in the hydrolysis of xylan, a major structural heterogeneous polysaccharide found in plant biomass representing the second most abundant polysaccharide in the biosphere, after cellulose. This chain is Endo-1,4-beta-xylanase 2 (xyn2), found in Humicola insolens (Soft-rot fungus).